A 321-amino-acid polypeptide reads, in one-letter code: Phospho-N-acetylmuramoyl-pentapeptide-transferase (321 aa).

Transmembrane regions (helical) follow at residues 1-21 (MSLL…FALM), 53-73 (TMGG…VGGW), 77-97 (LQPT…LGFW), 110-130 (GLKA…LTLV), 145-165 (LGVW…LVGF), 174-194 (GLDG…AVIA), 200-220 (YNVM…FVYN), 226-248 (IFMG…ILLH), and 301-321 (IDIV…ATII).

Belongs to the glycosyltransferase 4 family. MraY subfamily. The cofactor is Mg(2+).

It localises to the cell membrane. It carries out the reaction UDP-N-acetyl-alpha-D-muramoyl-L-alanyl-gamma-D-glutamyl-L-lysyl-D-alanyl-D-alanine + di-trans,octa-cis-undecaprenyl phosphate = Mur2Ac(oyl-L-Ala-gamma-D-Glu-L-Lys-D-Ala-D-Ala)-di-trans,octa-cis-undecaprenyl diphosphate + UMP. Its pathway is cell wall biogenesis; peptidoglycan biosynthesis. Functionally, catalyzes the initial step of the lipid cycle reactions in the biosynthesis of the cell wall peptidoglycan: transfers peptidoglycan precursor phospho-MurNAc-pentapeptide from UDP-MurNAc-pentapeptide onto the lipid carrier undecaprenyl phosphate, yielding undecaprenyl-pyrophosphoryl-MurNAc-pentapeptide, known as lipid I. The protein is Phospho-N-acetylmuramoyl-pentapeptide-transferase of Lactiplantibacillus plantarum (strain ATCC BAA-793 / NCIMB 8826 / WCFS1) (Lactobacillus plantarum).